Here is a 535-residue protein sequence, read N- to C-terminus: Dual specificity calcium/calmodulin-dependent 3',5'-cyclic nucleotide phosphodiesterase 1B (535 aa).

Residues 1 to 21 form a disordered region; that stretch reads MELSPRSPPEMLESDCPSPLE. Residues Ser7 and Ser14 each carry the phosphoserine modification. 2 calmodulin-binding regions span residues 27–47 and 117–140; these read SKKM…QLEN and EKPK…MFRR. A PDEase domain is found at 145 to 502; the sequence is VGPTYSTAVH…QKWKERAASG (358 aa). Catalysis depends on His222, which acts as the Proton donor. His226, His262, Asp263, and Asp369 together coordinate Zn(2+). A Mg(2+)-binding site is contributed by Asp263. Disordered regions lie at residues 444–474 and 495–535; these read QPLA…GDPN and WKER…GNLD. Polar residues predominate over residues 454-463; the sequence is KSQPSFQWRQ. Phosphoserine is present on residues Ser465 and Ser513.

This sequence belongs to the cyclic nucleotide phosphodiesterase family. PDE1 subfamily. Homodimer. The cofactor is Zn(2+). Mg(2+) serves as cofactor.

It is found in the cytoplasm. It localises to the cytosol. It catalyses the reaction a nucleoside 3',5'-cyclic phosphate + H2O = a nucleoside 5'-phosphate + H(+). The catalysed reaction is 3',5'-cyclic GMP + H2O = GMP + H(+). The enzyme catalyses 3',5'-cyclic AMP + H2O = AMP + H(+). With respect to regulation, type I PDE are activated by the binding of calmodulin in the presence of Ca(2+). Cyclic nucleotide phosphodiesterase with a dual specificity for the second messengers cAMP and cGMP, which are key regulators of many important physiological processes. Has a preference for cGMP as a substrate. The polypeptide is Dual specificity calcium/calmodulin-dependent 3',5'-cyclic nucleotide phosphodiesterase 1B (Mus musculus (Mouse)).